A 1010-amino-acid polypeptide reads, in one-letter code: Retinoblastoma-related protein 3 (1010 aa).

Residues 416 to 616 form a domain A region; that stretch reads TPVSTAMTTA…EKGSSMYNSL (201 aa). The interval 416-858 is pocket; it reads TPVSTAMTTA…NEVFIPAVKS (443 aa). The tract at residues 617–727 is spacer; that stretch reads IVARPALSVE…PAAGGETCAE (111 aa). The tract at residues 728–858 is domain B; the sequence is TGIGVFFSKI…NEVFIPAVKS (131 aa). 2 disordered regions span residues 867–889 and 986–1010; these read ASAS…FPES and GSDR…PSDS.

This sequence belongs to the retinoblastoma protein (RB) family.

It is found in the nucleus. Its function is as follows. Regulator of biological processes that recruits a histone deacetylase to control gene transcription. May play a role in the entry into mitosis, negatively regulating the cell proliferation. Formation of stable complexes with geminiviridae replication-associated proteins may create a cellular environment which favors viral DNA replication. The chain is Retinoblastoma-related protein 3 (RBR3) from Zea mays (Maize).